We begin with the raw amino-acid sequence, 369 residues long: Transcription factor GTE6 (369 aa).

Residues 89–198 form the Bromo domain; it reads KRMQDLMRQF…EKFEEKWAHF (110 aa). Residues 201 to 263 are a coiled coil; the sequence is KVQEEEKIRE…VERCRKITIE (63 aa). The NET domain occupies 250 to 331; the sequence is MRKVVERCRK…DALDNAMKKK (82 aa). Residues 329-348 show a composition bias toward basic and acidic residues; sequence KKKKEEETKTRELSGAQKKE. Residues 329–369 are disordered; it reads KKKKEEETKTRELSGAQKKEVSKKRNATTKLAERKTKRSRI. The Bipartite nuclear localization signal signature appears at 351-368; the sequence is KKRNATTKLAERKTKRSR.

As to expression, abundantly expressed in flowers. Weakly expressed in roots, leaves and siliques; and undetectable in 5-day-old seedlings. In the basal rosette leaves of 21-day-old plants, it is more abundant in leaves 6 and 7, which possess narrow elliptical laminae, than in leaves 1-4, which have round laminae, suggesting a possible correlation between its expression and the formation of elliptical leaf laminae in mature leaves.

It is found in the nucleus. In terms of biological role, regulates differences in leaf patterning between juvenile and mature leaves by controlling differences in the development of primordia produced during juvenile and mature phases. Acts by activating transcription of the myb-domain protein AS1, a gene involved in leaf-axis specification. Associates with the promoter and the start of the transcribed region of AS1 and up-regulates expression of AS1 through acetylation of histones H3 and H4. This Arabidopsis thaliana (Mouse-ear cress) protein is Transcription factor GTE6 (GTE6).